We begin with the raw amino-acid sequence, 476 residues long: Glucan endo-1,3-beta-glucosidase 9 (476 aa).

An N-terminal signal peptide occupies residues 1–25; it reads MARRLFLLLLAVTAGLSLTGTTVRA. Residues asparagine 88 and asparagine 101 are each glycosylated (N-linked (GlcNAc...) asparagine). Glutamate 122 acts as the Proton donor in catalysis. Residues asparagine 184, asparagine 216, asparagine 277, asparagine 320, asparagine 342, asparagine 374, and asparagine 405 are each glycosylated (N-linked (GlcNAc...) asparagine). An intrachain disulfide couples cysteine 364 to cysteine 424. Serine 453 is lipidated: GPI-anchor amidated serine. Residues 454–476 constitute a propeptide, removed in mature form; that stretch reads SSQTPNFFQSWPLLLLFLLSGLF.

The protein belongs to the glycosyl hydrolase 17 family. Contains two additional disulfide bonds.

It localises to the secreted. The protein resides in the cell wall. Its subcellular location is the cell membrane. The catalysed reaction is Hydrolysis of (1-&gt;3)-beta-D-glucosidic linkages in (1-&gt;3)-beta-D-glucans.. This Arabidopsis thaliana (Mouse-ear cress) protein is Glucan endo-1,3-beta-glucosidase 9.